The chain runs to 365 residues: uncharacterized protein (365 aa).

2 stretches are compositionally biased toward basic and acidic residues: residues 1–27 and 315–339; these read MDNVQEHDPDTQEHNNETQNHKQEDHS and AKDDEQYAKRLAKEEEERGKKETPK. Disordered stretches follow at residues 1–31 and 308–365; these read MDNVQEHDPDTQEHNNETQNHKQEDHSNSYQ and KEEK…CLIS. The span at 340–353 shows a compositional bias: polar residues; the sequence is KASNTPRRNKSNTQ.

This sequence to yeast YGL082w. Interacts with sad1.

Its subcellular location is the cytoplasm. This is an uncharacterized protein from Schizosaccharomyces pombe (strain 972 / ATCC 24843) (Fission yeast).